Here is a 68-residue protein sequence, read N- to C-terminus: Small integral membrane protein 10-like protein 3 (68 aa).

As to expression, expressed specifically in salivary glands (at protein level).

The protein is Small integral membrane protein 10-like protein 3 of Mus musculus (Mouse).